A 69-amino-acid polypeptide reads, in one-letter code: Cytochrome c oxidase subunit 8A, mitochondrial (69 aa).

A mitochondrion-targeting transit peptide spans 1-25 (MSVLTSLLLRGLTGSARWLPVPRAK). An SIFI-degron motif is present at residues 2–19 (SVLTSLLLRGLTGSARWL). Topologically, residues 26 to 36 (VHSMPPEVELG) are mitochondrial matrix. The helical transmembrane segment at 37–60 (IMEKAIGLTSCFVSLFLPAGWILS) threads the bilayer. Residues 61 to 69 (HLEDYKRPE) are Mitochondrial intermembrane-facing.

Belongs to the cytochrome c oxidase VIII family. Component of the cytochrome c oxidase (complex IV, CIV), a multisubunit enzyme composed of 14 subunits. The complex is composed of a catalytic core of 3 subunits MT-CO1, MT-CO2 and MT-CO3, encoded in the mitochondrial DNA, and 11 supernumerary subunits COX4I, COX5A, COX5B, COX6A, COX6B, COX6C, COX7A, COX7B, COX7C, COX8 and NDUFA4, which are encoded in the nuclear genome. The complex exists as a monomer or a dimer and forms supercomplexes (SCs) in the inner mitochondrial membrane with NADH-ubiquinone oxidoreductase (complex I, CI) and ubiquinol-cytochrome c oxidoreductase (cytochrome b-c1 complex, complex III, CIII), resulting in different assemblies (supercomplex SCI(1)III(2)IV(1) and megacomplex MCI(2)III(2)IV(2)). In response to mitochondrial stress, the precursor protein is ubiquitinated by the SIFI complex in the cytoplasm before mitochondrial import, leading to its degradation. Within the SIFI complex, UBR4 initiates ubiquitin chain that are further elongated or branched by KCMF1.

The protein resides in the mitochondrion inner membrane. It participates in energy metabolism; oxidative phosphorylation. Component of the cytochrome c oxidase, the last enzyme in the mitochondrial electron transport chain which drives oxidative phosphorylation. The respiratory chain contains 3 multisubunit complexes succinate dehydrogenase (complex II, CII), ubiquinol-cytochrome c oxidoreductase (cytochrome b-c1 complex, complex III, CIII) and cytochrome c oxidase (complex IV, CIV), that cooperate to transfer electrons derived from NADH and succinate to molecular oxygen, creating an electrochemical gradient over the inner membrane that drives transmembrane transport and the ATP synthase. Cytochrome c oxidase is the component of the respiratory chain that catalyzes the reduction of oxygen to water. Electrons originating from reduced cytochrome c in the intermembrane space (IMS) are transferred via the dinuclear copper A center (CU(A)) of subunit 2 and heme A of subunit 1 to the active site in subunit 1, a binuclear center (BNC) formed by heme A3 and copper B (CU(B)). The BNC reduces molecular oxygen to 2 water molecules using 4 electrons from cytochrome c in the IMS and 4 protons from the mitochondrial matrix. The chain is Cytochrome c oxidase subunit 8A, mitochondrial (COX8A) from Macaca silenus (Lion-tailed macaque).